We begin with the raw amino-acid sequence, 246 residues long: UPF0309 protein ABC0887 (246 aa).

The SIS domain maps to 33-212 (MVHAIKEGKS…VLKMIEQLEE (180 aa)).

It belongs to the UPF0309 family.

This is UPF0309 protein ABC0887 from Shouchella clausii (strain KSM-K16) (Alkalihalobacillus clausii).